We begin with the raw amino-acid sequence, 449 residues long: Clusterin (449 aa).

Residues Met-1–Gly-21 form the signal peptide. Residues Lys-77–Lys-80 carry the Nuclear localization signal motif. 2 N-linked (GlcNAc...) asparagine glycosylation sites follow: Asn-85 and Asn-102. 5 disulfide bridges follow: Cys-101–Cys-313, Cys-112–Cys-305, Cys-115–Cys-302, Cys-120–Cys-295, and Cys-128–Cys-285. Ser-132 bears the Phosphoserine mark. N-linked (GlcNAc...) asparagine glycosylation is found at Asn-144, Asn-291, Asn-328, Asn-354, and Asn-374. Phosphoserine is present on Ser-396. The short motif at Arg-443–Arg-447 is the Nuclear localization signal element.

The protein belongs to the clusterin family. As to quaternary structure, antiparallel disulfide-linked heterodimer of an alpha chain and a beta chain. Self-associates and forms higher oligomers. Interacts with a broad range of misfolded proteins, including APP, APOC2 and LYZ. Slightly acidic pH promotes interaction with misfolded proteins. Forms high-molecular weight oligomers upon interaction with misfolded proteins. Interacts with APOA1, LRP2, CLUAP1 and PON1. Interacts with the complement membrane attack complex. Interacts (via alpha chain) with XRCC6. Interacts with SYVN1, COMMD1, BTRC, CUL1 and with ubiquitin and SCF (SKP1-CUL1-F-box protein) E3 ubiquitin-protein ligase complexes. Interacts (via alpha chain) with BAX in stressed cells, where BAX undergoes a conformation change leading to association with the mitochondrial membrane. Does not interact with BAX in unstressed cells. Found in a complex with LTF, CLU, EPPIN and SEMG1. Interacts (immaturely glycosylated pre-secreted form) with HSPA5; this interaction promotes CLU stability and facilitates stress-induced CLU retrotranslocation from the secretory pathway to the mitochondria, thereby reducing stress-induced apoptosis by stabilizing mitochondrial membrane integrity. Interacts with BCL2L1; this interaction releases and activates BAX and promotes cell death. Interacts with TGFBR2 and ACVR1. Interacts (secreted form) with STMN3; this interaction may act as an important modulator during neuronal differentiation. Interacts with VLDLR and LRP8. Proteolytically cleaved on its way through the secretory system, probably within the Golgi lumen. Proteolytic cleavage is not necessary for its chaperone activity. All non-secreted forms are not proteolytically cleaved. Chaperone activity of uncleaved forms is dependent on a non-reducing environment. Post-translationally, polyubiquitinated, leading to proteasomal degradation. Under cellular stress, the intracellular level of cleaved form is reduced due to proteasomal degradation. In terms of processing, heavily N-glycosylated. About 30% of the protein mass is comprised of complex N-linked carbohydrate. Endoplasmic reticulum (ER) stress induces changes in glycosylation status and increases level of hypoglycosylated forms. Core carbohydrates are essential for chaperone activity. Non-secreted forms are hypoglycosylated or unglycosylated.

It localises to the secreted. The protein resides in the nucleus. Its subcellular location is the cytoplasm. It is found in the mitochondrion membrane. The protein localises to the cytosol. It localises to the microsome. The protein resides in the endoplasmic reticulum. Its subcellular location is the mitochondrion. It is found in the perinuclear region. The protein localises to the cytoplasmic vesicle. It localises to the secretory vesicle. The protein resides in the chromaffin granule. Functions as extracellular chaperone that prevents aggregation of non native proteins. Prevents stress-induced aggregation of blood plasma proteins. Inhibits formation of amyloid fibrils by APP, APOC2, B2M, CALCA, CSN3, SNCA and aggregation-prone LYZ variants (in vitro). Does not require ATP. Maintains partially unfolded proteins in a state appropriate for subsequent refolding by other chaperones, such as HSPA8/HSC70. Does not refold proteins by itself. Binding to cell surface receptors triggers internalization of the chaperone-client complex and subsequent lysosomal or proteasomal degradation. When secreted, protects cells against apoptosis and against cytolysis by complement: inhibits assembly of the complement membrane attack complex (MAC) by preventing polymerization of C9 pore component of the MAC complex. Intracellular forms interact with ubiquitin and SCF (SKP1-CUL1-F-box protein) E3 ubiquitin-protein ligase complexes and promote the ubiquitination and subsequent proteasomal degradation of target proteins. Promotes proteasomal degradation of COMMD1 and IKBKB. Modulates NF-kappa-B transcriptional activity. Following stress, promotes apoptosis. Inhibits apoptosis when associated with the mitochondrial membrane by interference with BAX-dependent release of cytochrome c into the cytoplasm. Plays a role in the regulation of cell proliferation. An intracellular form suppresses stress-induced apoptosis by stabilizing mitochondrial membrane integrity through interaction with HSPA5. Secreted form does not affect caspase or BAX-mediated intrinsic apoptosis and TNF-induced NF-kappa-B-activity. Secreted form act as an important modulator during neuronal differentiation through interaction with STMN3. Plays a role in the clearance of immune complexes that arise during cell injury. The polypeptide is Clusterin (CLU) (Equus caballus (Horse)).